We begin with the raw amino-acid sequence, 120 residues long: Putative defensin-like protein 179 (120 aa).

Residues 1–27 (MERTSTSLLFLLSLLIIFASAVNQIRA) form the signal peptide. 7 cysteine pairs are disulfide-bonded: Cys-37–Cys-56, Cys-40–Cys-63, Cys-44–Cys-65, Cys-74–Cys-120, Cys-85–Cys-105, Cys-90–Cys-114, and Cys-94–Cys-116.

Belongs to the DEFL family.

It is found in the secreted. This chain is Putative defensin-like protein 179 (LCR57), found in Arabidopsis thaliana (Mouse-ear cress).